Reading from the N-terminus, the 119-residue chain is Enhancer of yellow 2 transcription factor (119 aa).

The segment at 93 to 119 is disordered; it reads LTENETEGTDNHDDDEDDEDENGTEDN. The span at 96-119 shows a compositional bias: acidic residues; it reads NETEGTDNHDDDEDDEDENGTEDN.

This sequence belongs to the ENY2 family. As to quaternary structure, component of the nuclear pore complex (NPC)-associated AMEX complex (anchoring and mRNA export complex), composed of at least e(y)2 and xmas-2. Component of the SAGA transcription coactivator-HAT complexes, at least composed of Ada2b, e(y)2, Pcaf/Gcn5, Taf10 and Nipped-A/Trrap. Within the SAGA complex, e(y)2, Sgf11, and not/nonstop form an additional subcomplex of SAGA called the DUB module (deubiquitination module). Component of the THO complex, composed of at least e(y)2, HPR1, THO2, THOC5, THOC6 and THOC7. Interacts with e(y)1. Interacts with su(Hw) (via zinc fingers). Interacts with xmas-2; required for localization to the nuclear periphery. Interacts with the nuclear pore complex (NPC).

The protein localises to the nucleus. Its subcellular location is the nucleoplasm. It is found in the cytoplasm. In terms of biological role, involved in mRNA export coupled transcription activation by association with both the AMEX and the SAGA complexes. The SAGA complex is a multiprotein complex that activates transcription by remodeling chromatin and mediating histone acetylation and deubiquitination. Within the SAGA complex, participates in a subcomplex that specifically deubiquitinates histone H2B. The SAGA complex is recruited to specific gene promoters by activators, where it is required for transcription. Required for nuclear receptor-mediated transactivation. Involved in transcription elongation by recruiting the THO complex onto nascent mRNA. The AMEX complex functions in docking export-competent ribonucleoprotein particles (mRNPs) to the nuclear entrance of the nuclear pore complex (nuclear basket). AMEX participates in mRNA export and accurate chromatin positioning in the nucleus by tethering genes to the nuclear periphery. This is Enhancer of yellow 2 transcription factor from Drosophila willistoni (Fruit fly).